Reading from the N-terminus, the 623-residue chain is Immunity-related GTPase family Q protein (623 aa).

Residues C152 and C158 are joined by a disulfide bond. Positions 155-180 (SDGCEELERLRAALQSQAEALRRLLP) form a coiled coil. The LIR 1 signature appears at 186 to 189 (FEVL). The residue at position 203 (T203) is a Phosphothreonine. One can recognise an IRG-type G domain in the interval 223 to 449 (ARLDLAVAGK…PGLCEWLRRA (227 aa)). The disordered stretch occupies residues 334–393 (EGEDPECLGEGKMENPKGESLKNAGGGGLENALSKGREKCSAGSQKAGSGEGPGKAGSEG). The segment covering 342-353 (GEGKMENPKGES) has biased composition (basic and acidic residues). Positions 421-424 (WEVL) match the LIR 2 motif.

Belongs to the TRAFAC class dynamin-like GTPase superfamily. IRG family. As to quaternary structure, interacts (via LIR motif 1) with GABARAPL2. Interacts (via LIR motif 2) with MAP1LC3B/LC3B.

Its subcellular location is the lysosome. The protein resides in the cytoplasmic vesicle. It localises to the autophagosome. In terms of biological role, autophagy receptor that specifically promotes clearance of misfolded MHC class I molecules by targeting them to the lysosome for degradation. Acts as a molecular adapter that specifically recognizes and binds (1) misfolded MHC class I molecules following their ubiquitination, as well as (2) autophagy-related proteins, promoting the recruitment of misfolded MHC class I molecules to autophagy machinery for degradation. Degradation of misfolded MHC class I molecules is essential to prevent accumulation of defective MHC class I complexes at the surface of CD8(+) T-cells and prevent a stronger T-cell-mediated response. In contrast to other members of the family, does not show GTPase activity. The chain is Immunity-related GTPase family Q protein from Homo sapiens (Human).